A 78-amino-acid chain; its full sequence is Large ribosomal subunit protein eL20 (78 aa).

The protein belongs to the eukaryotic ribosomal protein eL20 family. As to quaternary structure, part of the 50S ribosomal subunit. Binds 23S rRNA.

This is Large ribosomal subunit protein eL20 from Nanoarchaeum equitans (strain Kin4-M).